We begin with the raw amino-acid sequence, 60 residues long: Large ribosomal subunit protein bL32 (60 aa).

The protein belongs to the bacterial ribosomal protein bL32 family.

The protein is Large ribosomal subunit protein bL32 of Clostridium novyi (strain NT).